Reading from the N-terminus, the 264-residue chain is tRNA pseudouridine synthase A (264 aa).

The active-site Nucleophile is Asp51. Residue Tyr109 coordinates substrate.

It belongs to the tRNA pseudouridine synthase TruA family. Homodimer.

The catalysed reaction is uridine(38/39/40) in tRNA = pseudouridine(38/39/40) in tRNA. In terms of biological role, formation of pseudouridine at positions 38, 39 and 40 in the anticodon stem and loop of transfer RNAs. The chain is tRNA pseudouridine synthase A from Polaromonas naphthalenivorans (strain CJ2).